Here is a 160-residue protein sequence, read N- to C-terminus: Ribosomal RNA large subunit methyltransferase H (160 aa).

Residues leucine 77, glycine 109, and 128–133 (FSRLTF) contribute to the S-adenosyl-L-methionine site.

The protein belongs to the RNA methyltransferase RlmH family. Homodimer.

It localises to the cytoplasm. The catalysed reaction is pseudouridine(1915) in 23S rRNA + S-adenosyl-L-methionine = N(3)-methylpseudouridine(1915) in 23S rRNA + S-adenosyl-L-homocysteine + H(+). Specifically methylates the pseudouridine at position 1915 (m3Psi1915) in 23S rRNA. The chain is Ribosomal RNA large subunit methyltransferase H from Desulfitobacterium hafniense (strain Y51).